The sequence spans 82 residues: Small ribosomal subunit protein bS16 (82 aa).

It belongs to the bacterial ribosomal protein bS16 family.

The polypeptide is Small ribosomal subunit protein bS16 (Yersinia enterocolitica serotype O:8 / biotype 1B (strain NCTC 13174 / 8081)).